Consider the following 302-residue polypeptide: D-alanine--D-alanine ligase B (302 aa).

The 196-residue stretch at 99 to 294 (KKVLKAENIR…YSKFIDLIIE (196 aa)) folds into the ATP-grasp domain. Residue 126 to 181 (IEEIGYPVFVKPNNGGSSVATFKVYKKEDIKNSVMEGLKYDEEVIIESFIKGREIT) coordinates ATP. Asp248, Glu261, and Asn263 together coordinate Mg(2+).

The protein belongs to the D-alanine--D-alanine ligase family. It depends on Mg(2+) as a cofactor. The cofactor is Mn(2+).

The protein localises to the cytoplasm. The catalysed reaction is 2 D-alanine + ATP = D-alanyl-D-alanine + ADP + phosphate + H(+). It functions in the pathway cell wall biogenesis; peptidoglycan biosynthesis. In terms of biological role, cell wall formation. In Clostridium perfringens (strain 13 / Type A), this protein is D-alanine--D-alanine ligase B.